A 430-amino-acid polypeptide reads, in one-letter code: Enolase (430 aa).

Gln-167 contributes to the (2R)-2-phosphoglycerate binding site. Glu-209 (proton donor) is an active-site residue. The Mg(2+) site is built by Asp-246, Glu-287, and Asp-314. Residues Lys-339, Arg-368, Ser-369, and Lys-390 each contribute to the (2R)-2-phosphoglycerate site. Residue Lys-339 is the Proton acceptor of the active site.

It belongs to the enolase family. Mg(2+) is required as a cofactor.

It localises to the cytoplasm. It is found in the secreted. The protein localises to the cell surface. The catalysed reaction is (2R)-2-phosphoglycerate = phosphoenolpyruvate + H2O. The protein operates within carbohydrate degradation; glycolysis; pyruvate from D-glyceraldehyde 3-phosphate: step 4/5. Functionally, catalyzes the reversible conversion of 2-phosphoglycerate (2-PG) into phosphoenolpyruvate (PEP). It is essential for the degradation of carbohydrates via glycolysis. In Prochlorococcus marinus (strain MIT 9312), this protein is Enolase.